The chain runs to 93 residues: Protein salt-induced and EIN3/EIL1-dependent 1 (93 aa).

The segment covering 23-36 (SSLLTESSSSSLCS) has biased composition (low complexity). The segment at 23-46 (SSLLTESSSSSLCSEEAEGGGGEA) is disordered.

Its activity is regulated as follows. Triggered by EIN3. In terms of biological role, involved in ethylene-dependent salt stress responses by reducing reactive oxygen species (ROS) accumulation. The protein is Protein salt-induced and EIN3/EIL1-dependent 1 of Arabidopsis thaliana (Mouse-ear cress).